Consider the following 407-residue polypeptide: DNA-directed RNA polymerase subunit Rpo1C (407 aa).

The protein belongs to the RNA polymerase beta' chain family. In terms of assembly, part of the RNA polymerase complex.

It is found in the cytoplasm. The enzyme catalyses RNA(n) + a ribonucleoside 5'-triphosphate = RNA(n+1) + diphosphate. Functionally, DNA-dependent RNA polymerase (RNAP) catalyzes the transcription of DNA into RNA using the four ribonucleoside triphosphates as substrates. Forms part of the jaw domain. The protein is DNA-directed RNA polymerase subunit Rpo1C of Aeropyrum pernix (strain ATCC 700893 / DSM 11879 / JCM 9820 / NBRC 100138 / K1).